The chain runs to 337 residues: Protein-methionine-sulfoxide reductase catalytic subunit MsrP (337 aa).

The tat-type signal signal peptide spans 1–54 (MLIKLPRSSECKASEITPEGIYLSRRTLLGGSLAGLALGALPGGVGAAQMSRYA). Residues N94, 97-98 (YE), C152, T187, N237, R242, and 253-255 (SIK) contribute to the Mo-molybdopterin site.

This sequence belongs to the MsrP family. In terms of assembly, heterodimer of a catalytic subunit (MsrP) and a heme-binding subunit (MsrQ). The cofactor is Mo-molybdopterin. Post-translationally, predicted to be exported by the Tat system. The position of the signal peptide cleavage has not been experimentally proven.

The protein localises to the periplasm. It catalyses the reaction L-methionyl-[protein] + a quinone + H2O = L-methionyl-(S)-S-oxide-[protein] + a quinol. The enzyme catalyses L-methionyl-[protein] + a quinone + H2O = L-methionyl-(R)-S-oxide-[protein] + a quinol. Part of the MsrPQ system that repairs oxidized periplasmic proteins containing methionine sulfoxide residues (Met-O), using respiratory chain electrons. Thus protects these proteins from oxidative-stress damage caused by reactive species of oxygen and chlorine generated by the host defense mechanisms. MsrPQ is essential for the maintenance of envelope integrity under bleach stress, rescuing a wide series of structurally unrelated periplasmic proteins from methionine oxidation. The catalytic subunit MsrP is non-stereospecific, being able to reduce both (R-) and (S-) diastereoisomers of methionine sulfoxide. The sequence is that of Protein-methionine-sulfoxide reductase catalytic subunit MsrP from Pseudomonas putida (strain ATCC 47054 / DSM 6125 / CFBP 8728 / NCIMB 11950 / KT2440).